Reading from the N-terminus, the 126-residue chain is Small ribosomal subunit protein uS12 (126 aa).

Asp-89 is subject to 3-methylthioaspartic acid.

It belongs to the universal ribosomal protein uS12 family. Part of the 30S ribosomal subunit. Contacts proteins S8 and S17. May interact with IF1 in the 30S initiation complex.

Functionally, with S4 and S5 plays an important role in translational accuracy. Interacts with and stabilizes bases of the 16S rRNA that are involved in tRNA selection in the A site and with the mRNA backbone. Located at the interface of the 30S and 50S subunits, it traverses the body of the 30S subunit contacting proteins on the other side and probably holding the rRNA structure together. The combined cluster of proteins S8, S12 and S17 appears to hold together the shoulder and platform of the 30S subunit. This is Small ribosomal subunit protein uS12 from Polynucleobacter asymbioticus (strain DSM 18221 / CIP 109841 / QLW-P1DMWA-1) (Polynucleobacter necessarius subsp. asymbioticus).